The primary structure comprises 168 residues: Peptide deformylase (168 aa).

Residues Cys-92 and His-134 each coordinate Fe cation. Glu-135 is a catalytic residue. Fe cation is bound at residue His-138.

It belongs to the polypeptide deformylase family. Requires Fe(2+) as cofactor.

The enzyme catalyses N-terminal N-formyl-L-methionyl-[peptide] + H2O = N-terminal L-methionyl-[peptide] + formate. In terms of biological role, removes the formyl group from the N-terminal Met of newly synthesized proteins. Requires at least a dipeptide for an efficient rate of reaction. N-terminal L-methionine is a prerequisite for activity but the enzyme has broad specificity at other positions. The polypeptide is Peptide deformylase (Hahella chejuensis (strain KCTC 2396)).